The chain runs to 94 residues: Large ribosomal subunit protein uL23 (94 aa).

This sequence belongs to the universal ribosomal protein uL23 family. Part of the 50S ribosomal subunit. Contacts protein L29, and trigger factor when it is bound to the ribosome.

Its function is as follows. One of the early assembly proteins it binds 23S rRNA. One of the proteins that surrounds the polypeptide exit tunnel on the outside of the ribosome. Forms the main docking site for trigger factor binding to the ribosome. The polypeptide is Large ribosomal subunit protein uL23 (Phytoplasma australiense).